Here is a 779-residue protein sequence, read N- to C-terminus: Endonuclease MutS2 (779 aa).

328-335 serves as a coordination point for ATP; that stretch reads GPNTGGKT. Positions 704-779 constitute a Smr domain; it reads LDLRGKRYEE…GSGATIVTLG (76 aa).

Belongs to the DNA mismatch repair MutS family. MutS2 subfamily. In terms of assembly, homodimer. Binds to stalled ribosomes, contacting rRNA.

Its function is as follows. Endonuclease that is involved in the suppression of homologous recombination and thus may have a key role in the control of bacterial genetic diversity. In terms of biological role, acts as a ribosome collision sensor, splitting the ribosome into its 2 subunits. Detects stalled/collided 70S ribosomes which it binds and splits by an ATP-hydrolysis driven conformational change. Acts upstream of the ribosome quality control system (RQC), a ribosome-associated complex that mediates the extraction of incompletely synthesized nascent chains from stalled ribosomes and their subsequent degradation. Probably generates substrates for RQC. The chain is Endonuclease MutS2 from Streptococcus agalactiae serotype III (strain NEM316).